The chain runs to 485 residues: Probable L-xylulose kinase (485 aa).

The protein belongs to the FGGY kinase family. Homodimer.

The enzyme catalyses L-xylulose + ATP = L-xylulose 5-phosphate + ADP + H(+). This is Probable L-xylulose kinase (lyx) from Haemophilus influenzae (strain ATCC 51907 / DSM 11121 / KW20 / Rd).